We begin with the raw amino-acid sequence, 227 residues long: MIDMLKKGLEKTLKFFPRLEDLAEVFDPLHRGEAFASSPNPRSIERKYILNVPTLKAKSSVEKITDGQSYEILGQPTGFEISEVKTAEGEIKIRIDFVNNIFADVMKIMCNVGLVLMMVFAAFYFAGINPADNLNLEVQKWSEPAEKFWSDVKGIHSTGYSWFLQNPLDPENAILLSVTLLALTPVIGILLTIPRSTGALRVIFLVIAVEFVYAIFRVMMGGGPMGH.

3 consecutive transmembrane segments (helical) span residues 109–128 (MCNV…FAGI), 173–192 (AILL…ILLT), and 199–221 (ALRV…VMMG).

It is found in the cell membrane. This is an uncharacterized protein from Archaeoglobus fulgidus (strain ATCC 49558 / DSM 4304 / JCM 9628 / NBRC 100126 / VC-16).